The following is a 522-amino-acid chain: FAD-dependent monooxygenase fsr3 (522 aa).

The disordered stretch occupies residues 1–27 (MKNTQTNGTHPIIDKKPNGTLNGDHQE). Arg164 serves as a coordination point for FAD. Arg245 is a catalytic residue. The FAD site is built by Asp369 and Ala382.

This sequence belongs to the paxM FAD-dependent monooxygenase family. FAD serves as cofactor.

Its pathway is polyketide biosynthesis. FAD-dependent monooxygenase; part of the gene cluster that mediates the biosynthesis of fusarubins, highly pigmented naphthoquinones responsible for the coloration of the fruiting bodies. The non-reducing polyketide synthase FSR1 is responsible for the condensation of seven acetyl-CoA units to yield a haptaketide. After rings A and B are formed by aldol-type cyclization, the PKS-derived product is released as 6-O-demethylfusarubinaldehyde. Then, two hydroxyl groups at C-5 and C-10 are incorporated by FSR3, and simultaneously hydroxyl groups at C-6 and C-8 are methylated by FSR2. The aldehyde is, on the one hand, reduced by FSR3 to 8-O-methylfusarubin alcohol, which equilibrates mainly with 8-O-methylfusarubin and only small amounts of 8-O-methylnectriafurone. On the other hand, the aldehyde can be oxidized to form 8-O-methylfusarubinic acid, a reaction driven by FSR3 equilibrating with 8-O-methylfusarubinlactone, finally resulting in 8-O-methylanhydrofusarubinlactol after a further reduction step and loss of water. 8-O-Methylfusarubinic acid can also undergo decarboxylation, resulting in 8-O-methyl-13-hydroxynorjavanicin after another hydroxylation step at C-13. Both steps are most likely also accomplished by FSR3. No enzymatic function has been determined so far for either FSR4 and FSR5. Their deletion does not alter the product spectrum, but the possibility that they catalyze specific enzymatic steps during perithecium development cannot be ruled out. FSR4 might possess a regulatory function in the biosynthesis of fusarubins. The chain is FAD-dependent monooxygenase fsr3 from Gibberella fujikuroi (strain CBS 195.34 / IMI 58289 / NRRL A-6831) (Bakanae and foot rot disease fungus).